A 204-amino-acid chain; its full sequence is Phosphopantothenoylcysteine decarboxylase (204 aa).

FMN is bound by residues Thr53 and 104–107; that span reads DANT. Asn140 serves as a coordination point for substrate. Residue Cys173 is the Proton donor of the active site.

It belongs to the HFCD (homooligomeric flavin containing Cys decarboxylase) superfamily. As to quaternary structure, homotrimer. FMN is required as a cofactor.

It catalyses the reaction N-[(R)-4-phosphopantothenoyl]-L-cysteine + H(+) = (R)-4'-phosphopantetheine + CO2. Its pathway is cofactor biosynthesis; coenzyme A biosynthesis; CoA from (R)-pantothenate: step 3/5. Functionally, catalyzes the decarboxylation of the cysteine moiety of 4-phosphopantothenoylcysteine to form 4'-phosphopantotheine and this reaction forms part of the biosynthesis of coenzyme A. The polypeptide is Phosphopantothenoylcysteine decarboxylase (Ppcdc) (Mus musculus (Mouse)).